Reading from the N-terminus, the 291-residue chain is Malolactic fermentation system transcriptional activator (291 aa).

The region spanning 1 to 60 (MSLNLRDLEYFYQLSKLRSFTNVAKHFRVSQPTISYAIKRLETYYDCDLFYKDSSHQVVD) is the HTH lysR-type domain. The segment at residues 20–39 (FTNVAKHFRVSQPTISYAIK) is a DNA-binding region (H-T-H motif).

Belongs to the LysR transcriptional regulatory family.

It localises to the cytoplasm. Its function is as follows. Required for malolactic fermentation. It is most probably a transcriptional activator. The sequence is that of Malolactic fermentation system transcriptional activator (mleR) from Lactococcus lactis subsp. lactis (strain IL1403) (Streptococcus lactis).